Consider the following 157-residue polypeptide: Ribosome-binding factor A (157 aa).

A disordered region spans residues 124–157; the sequence is SAGAQFAGDADPYRKPESDDESDTAAKTDGDAAE. Residues 147 to 157 are compositionally biased toward basic and acidic residues; it reads TAAKTDGDAAE.

Belongs to the RbfA family. Monomer. Binds 30S ribosomal subunits, but not 50S ribosomal subunits or 70S ribosomes.

The protein localises to the cytoplasm. One of several proteins that assist in the late maturation steps of the functional core of the 30S ribosomal subunit. Associates with free 30S ribosomal subunits (but not with 30S subunits that are part of 70S ribosomes or polysomes). Required for efficient processing of 16S rRNA. May interact with the 5'-terminal helix region of 16S rRNA. This is Ribosome-binding factor A from Streptomyces avermitilis (strain ATCC 31267 / DSM 46492 / JCM 5070 / NBRC 14893 / NCIMB 12804 / NRRL 8165 / MA-4680).